The chain runs to 295 residues: Glycine N-acyltransferase-like protein Keg1 (295 aa).

The residue at position 41 (Lys41) is an N6-acetyllysine; alternate. The residue at position 41 (Lys41) is an N6-succinyllysine; alternate. Lys43 is subject to N6-acetyllysine. Lys48 bears the N6-acetyllysine; alternate mark. At Lys48 the chain carries N6-succinyllysine; alternate. N6-acetyllysine occurs at positions 80 and 83. Lys124, Lys128, and Lys140 each carry N6-acetyllysine; alternate. N6-succinyllysine; alternate is present on residues Lys124, Lys128, and Lys140. Lys150 bears the N6-acetyllysine mark. Lys255 bears the N6-acetyllysine; alternate mark. An N6-succinyllysine; alternate modification is found at Lys255.

This sequence belongs to the glycine N-acyltransferase family. As to quaternary structure, binds to microtubules. Specifically expressed in kidney and liver. Up-regulated in the regenerating liver as well as in hepatocellular carcinoma.

It localises to the cytoplasm. The protein localises to the cytoskeleton. It is found in the microtubule organizing center. The protein resides in the centrosome. It carries out the reaction an acyl-CoA + glycine = an N-acylglycine + CoA + H(+). In terms of biological role, acyltransferase which transfers the acyl group to the N-terminus of glycine. Can conjugate a multitude of substrates to form a variety of N-acylglycines. This chain is Glycine N-acyltransferase-like protein Keg1 (Keg1), found in Rattus norvegicus (Rat).